The primary structure comprises 1729 residues: Zinc finger CCCH domain-containing protein 13 (1729 aa).

Disordered regions lie at residues 1–40 (MSKI…TTET) and 57–156 (CRFI…NGDI). Polar residues predominate over residues 10–23 (VENTKTISESTSRR). The segment at 36 to 64 (STTETQCRNWLKTGSCLYGNTCRFIHGPS) adopts a C3H1-type zinc-finger fold. Phosphoserine is present on residues serine 64 and serine 77. Residues 76 to 136 (RSPERPTGDL…IKIVKERTPE (61 aa)) show a composition bias toward basic and acidic residues. Positions 162–196 (HELSLEMKRQKIQRELMKLEQENMDKREEIIIQKE) form a coiled coil. Lysine 179 is covalently cross-linked (Glycyl lysine isopeptide (Lys-Gly) (interchain with G-Cter in SUMO2)). Residues 182–193 (QENMDKREEIII) show a composition bias toward basic and acidic residues. Disordered regions lie at residues 182 to 528 (QENM…IRDV) and 581 to 1527 (DVYQ…PISD). Phosphoserine occurs at positions 198, 207, 209, and 211. Over residues 204 to 213 (SKLSPSPSLR) the composition is skewed to low complexity. The segment covering 214–224 (KSSKSPKRKSS) has biased composition (basic residues). A Phosphoserine modification is found at serine 242. Residues 245 to 254 (LDQQRNSKGN) show a composition bias toward polar residues. Residue threonine 263 is modified to Phosphothreonine. Serine 265 bears the Phosphoserine mark. Positions 283 to 315 (KYKVKDRIEEKPRDGKDRGRDFEKQREKRDKPR) are enriched in basic and acidic residues. 4 positions are modified to phosphoserine: serine 316, serine 318, serine 324, and serine 327. Over residues 321-345 (QHHSPLSSRHHSSSSQSGSSIQRHS) the composition is skewed to low complexity. Phosphothreonine occurs at positions 353 and 363. Polar residues predominate over residues 358 to 368 (YQRTLTPSLRR). Residues serine 369, serine 371, and serine 380 each carry the phosphoserine modification. Basic and acidic residues-rich tracts occupy residues 393–528 (PMRE…IRDV) and 581–636 (DVYQ…EKGS). A compositionally biased stretch (polar residues) spans 639-654 (TRGSQMDSHSSGSNYH). The segment covering 655-701 (DSWETRSSYPERDRYPERDTRDPARDSSFERRHGERDRRDNRERDQR) has biased composition (basic and acidic residues). Serine 704 carries the post-translational modification Phosphoserine. Residues 706 to 865 (IRHQGRSEEL…KERERQREWE (160 aa)) are a coiled coil. Basic and acidic residues predominate over residues 710-897 (GRSEELERDE…IPRDSHEERK (188 aa)). Phosphoserine occurs at positions 907, 909, 913, 921, 924, 929, 949, 951, and 953. Positions 920 to 938 (HSPDSDTYHSGDDKNEKHR) are enriched in basic and acidic residues. Over residues 957–1035 (LTEDRQGRWK…GSDRAHDEKK (79 aa)) the composition is skewed to basic and acidic residues. Residue threonine 958 is modified to Phosphothreonine. Basic residues predominate over residues 1036-1046 (KAKAPKKPVKK). Positions 1047 to 1065 (KKEEDVGVERGNLETHEDS) are enriched in basic and acidic residues. Residues serine 1069, serine 1086, serine 1090, and serine 1093 each carry the phosphoserine modification. Residues 1072-1086 (KGQKKKNIEKKRKRS) are compositionally biased toward basic residues. At threonine 1109 the chain carries Phosphothreonine. Composition is skewed to basic and acidic residues over residues 1114 to 1137 (IKEE…KKEN) and 1149 to 1159 (PDRTEGLEAEH). Composition is skewed to low complexity over residues 1160-1176 (TAAT…LSSL) and 1184-1218 (AAAS…TNGS). Residues 1228–1253 (ARGEKVEVSHVTLEDTPHRKLVDQKR) are compositionally biased toward basic and acidic residues. Serine 1256, serine 1259, serine 1273, and serine 1275 each carry phosphoserine. Residues 1278 to 1288 (SAHRSGDDQGS) are compositionally biased toward basic and acidic residues. Serine 1295 carries the phosphoserine modification. 2 stretches are compositionally biased toward basic and acidic residues: residues 1296 to 1351 (GSRD…DRQV) and 1359 to 1440 (DSRD…ERTF). Phosphoserine is present on residues serine 1427, serine 1443, serine 1447, serine 1467, serine 1470, serine 1499, and serine 1526. Basic and acidic residues-rich tracts occupy residues 1447–1482 (SGKR…DRDL) and 1490–1499 (DVSKAERTES).

It belongs to the ZC3H13 family. Component of the WMM complex, a N6-methyltransferase complex composed of a catalytic subcomplex, named MAC, and of an associated subcomplex, named MACOM. The MAC subcomplex is composed of METTL3 and METTL14. The MACOM subcomplex is composed of WTAP, ZC3H13, CBLL1/HAKAI, VIRMA, and, in some cases of RBM15 (RBM15 or RBM15B). Also a component of a MACOM-like complex, named WTAP complex, composed of WTAP, ZC3H13, CBLL1/HAKAI, VIRMA, RBM15, BCLAF1 and THRAP3.

It is found in the nucleus speckle. The protein localises to the nucleus. It localises to the nucleoplasm. Functionally, associated component of the WMM complex, a complex that mediates N6-methyladenosine (m6A) methylation of RNAs, a modification that plays a role in the efficiency of mRNA splicing and RNA processing. Acts as a key regulator of m6A methylation by promoting m6A methylation of mRNAs at the 3'-UTR. Controls embryonic stem cells (ESCs) pluripotency via its role in m6A methylation. In the WMM complex, anchors component of the MACOM subcomplex in the nucleus. Also required for bridging WTAP to the RNA-binding component RBM15 (RBM15 or RBM15B). The protein is Zinc finger CCCH domain-containing protein 13 of Mus musculus (Mouse).